The chain runs to 382 residues: Probable inactive dehydrogenase easA (382 aa).

FMN contacts are provided by residues Pro25 to Thr27, Ala60, Gln102, and His171. Substrate contacts are provided by His171 and Asn174. FMN-binding positions include Lys223, Gly299, Gly324–Arg325, and Arg325. Tyr352 serves as a coordination point for substrate.

Belongs to the NADH:flavin oxidoreductase/NADH oxidase family.

Functionally, probable inactive dehydrogenase; part of the gene cluster that mediates the biosynthesis of fungal ergot alkaloid. DmaW catalyzes the first step of ergot alkaloid biosynthesis by condensing dimethylallyl diphosphate (DMAP) and tryptophan to form 4-dimethylallyl-L-tryptophan. The second step is catalyzed by the methyltransferase easF that methylates 4-dimethylallyl-L-tryptophan in the presence of S-adenosyl-L-methionine, resulting in the formation of 4-dimethylallyl-L-abrine. The catalase easC and the FAD-dependent oxidoreductase easE then transform 4-dimethylallyl-L-abrine to chanoclavine-I which is further oxidized by easD in the presence of NAD(+), resulting in the formation of chanoclavine-I aldehyde. Agroclavine dehydrogenase easG then mediates the conversion of chanoclavine-I aldehyde to agroclavine via a non-enzymatic adduct reaction: the substrate is an iminium intermediate that is formed spontaneously from chanoclavine-I aldehyde in the presence of glutathione. Further conversion of agroclavine to paspalic acid is a two-step process involving oxidation of agroclavine to elymoclavine and of elymoclavine to paspalic acid, the second step being performed by the elymoclavine oxidase cloA. However, cloA does not encode a functional enzyme indicating that C.fusiformis terminates its ergot alkaloid pathway at elymoclavine. The chain is Probable inactive dehydrogenase easA from Claviceps fusiformis (Ergot fungus).